Consider the following 299-residue polypeptide: Spermatocyte protein spe-11 (299 aa).

The segment at 1–38 (MSDEEIDISTALNNKTTPKKKSLKRNSNSQEGYESPEE) is disordered.

Expressed in mature sperm.

Its subcellular location is the cytoplasm. It localises to the perinuclear region. Paternally sperm-supplied factor required for embryogenesis. Plays a role in preventing polyspermy possibly by promoting the formation of a continuous and cohesive eggshell chitin layer. The chain is Spermatocyte protein spe-11 (spe-11) from Caenorhabditis elegans.